We begin with the raw amino-acid sequence, 383 residues long: 3-dehydroquinate synthase (383 aa).

Residues glutamate 81–lysine 86, glycine 115–aspartate 119, threonine 139–serine 140, lysine 152, and lysine 161 each bind NAD(+). Zn(2+) is bound by residues glutamate 194, histidine 256, and histidine 274.

Belongs to the sugar phosphate cyclases superfamily. Dehydroquinate synthase family. Co(2+) serves as cofactor. Zn(2+) is required as a cofactor. The cofactor is NAD(+).

Its subcellular location is the cytoplasm. It carries out the reaction 7-phospho-2-dehydro-3-deoxy-D-arabino-heptonate = 3-dehydroquinate + phosphate. It participates in metabolic intermediate biosynthesis; chorismate biosynthesis; chorismate from D-erythrose 4-phosphate and phosphoenolpyruvate: step 2/7. In terms of biological role, catalyzes the conversion of 3-deoxy-D-arabino-heptulosonate 7-phosphate (DAHP) to dehydroquinate (DHQ). In Nitrobacter winogradskyi (strain ATCC 25391 / DSM 10237 / CIP 104748 / NCIMB 11846 / Nb-255), this protein is 3-dehydroquinate synthase.